Here is a 204-residue protein sequence, read N- to C-terminus: Large ribosomal subunit protein uL4 (204 aa).

Positions 53-77 are disordered; it reads ISDVSGTTAKPYSQKRTGRARQGSL. The segment covering 56 to 67 has biased composition (polar residues); the sequence is VSGTTAKPYSQK.

Belongs to the universal ribosomal protein uL4 family. In terms of assembly, part of the 50S ribosomal subunit.

Functionally, one of the primary rRNA binding proteins, this protein initially binds near the 5'-end of the 23S rRNA. It is important during the early stages of 50S assembly. It makes multiple contacts with different domains of the 23S rRNA in the assembled 50S subunit and ribosome. Its function is as follows. Forms part of the polypeptide exit tunnel. This Wolbachia sp. subsp. Brugia malayi (strain TRS) protein is Large ribosomal subunit protein uL4.